The primary structure comprises 361 residues: Peptide chain release factor 1 (361 aa).

Glutamine 235 carries the N5-methylglutamine modification.

The protein belongs to the prokaryotic/mitochondrial release factor family. In terms of processing, methylated by PrmC. Methylation increases the termination efficiency of RF1.

The protein localises to the cytoplasm. Its function is as follows. Peptide chain release factor 1 directs the termination of translation in response to the peptide chain termination codons UAG and UAA. This is Peptide chain release factor 1 from Xanthomonas campestris pv. campestris (strain B100).